Consider the following 425-residue polypeptide: Polyribonucleotide 5'-hydroxyl-kinase Clp1 (425 aa).

ATP is bound by residues Glu-22, Lys-62, and 124–129; that span reads DVGKST.

Belongs to the Clp1 family. Clp1 subfamily. In terms of assembly, component of the tRNA splicing endonuclease complex, composed of CLP1, TSEN2, TSEN15, TSEN34 and TSEN54. Component of pre-mRNA cleavage complex II (CF-II). Also associates with numerous components of the pre-mRNA cleavage complex I (CF-I/CFIm), including NUDT21, CPSF2, CPSF3, CPSF6 and CPSF7. Interacts with CSTF2 and SYMPK. The cofactor is Mg(2+). Mn(2+) serves as cofactor. It depends on Ni(2+) as a cofactor.

The protein resides in the nucleus. The enzyme catalyses a 5'-end dephospho-2'-deoxyribonucleoside-DNA + ATP = a 5'-end 5'-phospho-2'-deoxyribonucleoside-DNA + ADP + H(+). It catalyses the reaction a 5'-end dephospho-ribonucleoside-RNA + ATP = a 5'-end 5'-phospho-ribonucleoside-RNA + ADP + H(+). Functionally, polynucleotide kinase that can phosphorylate the 5'-hydroxyl groups of double-stranded RNA (dsRNA), single-stranded RNA (ssRNA), double-stranded DNA (dsDNA) and double-stranded DNA:RNA hybrids. dsRNA is phosphorylated more efficiently than dsDNA, and the RNA component of a DNA:RNA hybrid is phosphorylated more efficiently than the DNA component. Plays a key role in both tRNA splicing and mRNA 3'-end formation. Component of the tRNA splicing endonuclease complex: phosphorylates the 5'-terminus of the tRNA 3'-exon during tRNA splicing; this phosphorylation event is a prerequisite for the subsequent ligation of the two exon halves and the production of a mature tRNA. Its role in tRNA splicing and maturation is required for cerebellar development. Component of the pre-mRNA cleavage complex II (CF-II), which seems to be required for mRNA 3'-end formation. Also phosphorylates the 5'-terminus of exogenously introduced short interfering RNAs (siRNAs), which is a necessary prerequisite for their incorporation into the RNA-induced silencing complex (RISC). However, endogenous siRNAs and microRNAs (miRNAs) that are produced by the cleavage of dsRNA precursors by DICER1 already contain a 5'-phosphate group, so this protein may be dispensible for normal RNA-mediated gene silencing. This Bos taurus (Bovine) protein is Polyribonucleotide 5'-hydroxyl-kinase Clp1.